A 636-amino-acid polypeptide reads, in one-letter code: Sodium-dependent multivitamin transporter (636 aa).

Transmembrane regions (helical) follow at residues 24-44 (FSLVDYVVFSLLLVFSLAIGL), 68-88 (CLPVALSLLATFQSAVAILGV), 101-121 (FLGCCYFLGLLIPAHVFIPVF), 143-163 (ICGTVTFIFQMVIYMGVVLYA), 176-196 (LWLSVLTLGIVCTIYTALGGL), 199-219 (VIWTDVFQTLVMFLGQLAVII), 256-276 (FWTLAFGGVFMMLSLYGVNQA), 297-317 (VFPCQQVALSMGCLIGLVMFA), 336-356 (FVLYFVMDLLKGLPGLPGLFV), 404-424 (FGYGLLCLGMAYISSQMGPVL), 428-448 (ISIFGMVGGPLLGLFCLGMFF), and 456-476 (AIVGLLAGLIMAFWIGIGSIV). Asn-489 and Asn-498 each carry an N-linked (GlcNAc...) asparagine glycan. Residues 528–548 (LWYSAHNSTTVIVVGLIVSLL) traverse the membrane as a helical segment. The disordered stretch occupies residues 606-627 (LRASGDKEPMTEASPVHQGTSP).

Belongs to the sodium:solute symporter (SSF) (TC 2.A.21) family. In terms of assembly, interacts with PDZD11.

It localises to the cell membrane. Its subcellular location is the apical cell membrane. The enzyme catalyses biotin(out) + 2 Na(+)(out) = biotin(in) + 2 Na(+)(in). The catalysed reaction is (R)-pantothenate(out) + 2 Na(+)(out) = (R)-pantothenate(in) + 2 Na(+)(in). It catalyses the reaction (R)-lipoate(out) + 2 Na(+)(out) = (R)-lipoate(in) + 2 Na(+)(in). It carries out the reaction iodide(out) + 2 Na(+)(out) = iodide(in) + 2 Na(+)(in). Its function is as follows. Sodium-dependent multivitamin transporter that mediates the electrogenic transport of pantothenate, biotin, lipoate and iodide. Functions as a Na(+)-coupled substrate symporter where the stoichiometry of Na(+):substrate is 2:1, creating an electrochemical Na(+) gradient used as driving force for substrate uptake. Required for biotin and pantothenate uptake in the intestine across the brush border membrane. Plays a role in the maintenance of intestinal mucosa integrity, by providing the gut mucosa with biotin. Contributes to the luminal uptake of biotin and pantothenate into the brain across the blood-brain barrier. In Oryctolagus cuniculus (Rabbit), this protein is Sodium-dependent multivitamin transporter (SLC5A6).